Here is a 592-residue protein sequence, read N- to C-terminus: Glutamine--fructose-6-phosphate aminotransferase [isomerizing] (592 aa).

The active-site Nucleophile; for GATase activity is cysteine 2. Positions 2–217 (CGIVGYVGRD…DGEIADLTPD (216 aa)) constitute a Glutamine amidotransferase type-2 domain. SIS domains lie at 277–416 (IPFK…EREN) and 441–582 (VAEK…VDQP). Catalysis depends on lysine 587, which acts as the For Fru-6P isomerization activity.

In terms of assembly, homodimer.

The protein localises to the cytoplasm. It carries out the reaction D-fructose 6-phosphate + L-glutamine = D-glucosamine 6-phosphate + L-glutamate. Functionally, catalyzes the first step in hexosamine metabolism, converting fructose-6P into glucosamine-6P using glutamine as a nitrogen source. The polypeptide is Glutamine--fructose-6-phosphate aminotransferase [isomerizing] (Aquifex aeolicus (strain VF5)).